Here is a 338-residue protein sequence, read N- to C-terminus: Ketol-acid reductoisomerase (NADP(+)) (338 aa).

A KARI N-terminal Rossmann domain is found at 1–181 (MKVFYDKDAD…GGGRAGIIET (181 aa)). Residues 24-27 (YGSQ), Arg-47, and Ser-52 contribute to the NADP(+) site. His-107 is a catalytic residue. Gly-133 is a binding site for NADP(+). One can recognise a KARI C-terminal knotted domain in the interval 182–327 (NFREETETDL…SKLRAMMPWI (146 aa)). Residues Asp-190, Glu-194, Glu-226, and Glu-230 each contribute to the Mg(2+) site. Position 251 (Ser-251) interacts with substrate.

It belongs to the ketol-acid reductoisomerase family. The cofactor is Mg(2+).

The catalysed reaction is (2R)-2,3-dihydroxy-3-methylbutanoate + NADP(+) = (2S)-2-acetolactate + NADPH + H(+). The enzyme catalyses (2R,3R)-2,3-dihydroxy-3-methylpentanoate + NADP(+) = (S)-2-ethyl-2-hydroxy-3-oxobutanoate + NADPH + H(+). The protein operates within amino-acid biosynthesis; L-isoleucine biosynthesis; L-isoleucine from 2-oxobutanoate: step 2/4. Its pathway is amino-acid biosynthesis; L-valine biosynthesis; L-valine from pyruvate: step 2/4. In terms of biological role, involved in the biosynthesis of branched-chain amino acids (BCAA). Catalyzes an alkyl-migration followed by a ketol-acid reduction of (S)-2-acetolactate (S2AL) to yield (R)-2,3-dihydroxy-isovalerate. In the isomerase reaction, S2AL is rearranged via a Mg-dependent methyl migration to produce 3-hydroxy-3-methyl-2-ketobutyrate (HMKB). In the reductase reaction, this 2-ketoacid undergoes a metal-dependent reduction by NADPH to yield (R)-2,3-dihydroxy-isovalerate. In Burkholderia mallei (strain NCTC 10229), this protein is Ketol-acid reductoisomerase (NADP(+)).